The sequence spans 382 residues: Toluene efflux pump periplasmic linker protein TtgD (382 aa).

The N-terminal stretch at 1 to 23 (MRLERALRARQLIPLAAIWLLVG) is a signal peptide. A lipid anchor (N-palmitoyl cysteine) is attached at C24. C24 is lipidated: S-diacylglycerol cysteine. Residues 100-136 (YEALLARAEASLLTAQNLARRYERLLDTNAISQQQYD) are a coiled coil.

Belongs to the membrane fusion protein (MFP) (TC 8.A.1) family.

The protein resides in the cell inner membrane. Its function is as follows. The periplasmic linker protein component of an inducible organic solvent efflux pump. Involved in export of toluene and styrene but not of m-xylene, propylbenzene or ethylbenzene. Is not involved in antibiotic or AMP efflux. The sequence is that of Toluene efflux pump periplasmic linker protein TtgD (ttgD) from Pseudomonas putida (strain DOT-T1E).